A 136-amino-acid chain; its full sequence is Histone H3.3C (136 aa).

Residues 1–42 (MARTKQTARKSTGGKAPRKQLVTKAAKKCAPATGGVKKPHRY) form a disordered region. R3 carries the post-translational modification Asymmetric dimethylarginine; by PRMT6. T4 bears the Phosphothreonine; by HASPIN mark. Residue K5 is modified to Allysine; alternate. N6,N6,N6-trimethyllysine; alternate is present on K5. An N6,N6-dimethyllysine; alternate modification is found at K5. K5 is modified (N6-(2-hydroxyisobutyryl)lysine; alternate). K5 carries the N6-acetyllysine; alternate modification. Residue K5 is modified to N6-methyllysine; alternate. At Q6 the chain carries 5-glutamyl dopamine; alternate. Q6 is subject to 5-glutamyl serotonin; alternate. Residue T7 is modified to Phosphothreonine; by PKC. K10 is subject to N6-(2-hydroxyisobutyryl)lysine; alternate. Residue K10 is modified to N6-lactoyllysine; alternate. K10 is subject to N6-methylated lysine. S11 is modified (ADP-ribosylserine; alternate). Phosphoserine; alternate; by AURKB, AURKC, RPS6KA3, RPS6KA4 and RPS6KA5 is present on S11. T12 is subject to Phosphothreonine; by PKC. N6-(2-hydroxyisobutyryl)lysine; alternate is present on K15. An N6-lactoyllysine; alternate modification is found at K15. K15 is subject to N6-acetyllysine. At K15 the chain carries N6-glutaryllysine; alternate. R18 is modified (asymmetric dimethylarginine). An N6-(2-hydroxyisobutyryl)lysine; alternate mark is found at K19, K24, K28, and K37. Position 19 is an N6-acetyllysine; alternate (K19). Residues K19, K24, and K28 each carry the N6-lactoyllysine; alternate modification. Residues K19, K24, and K28 each carry the N6-glutaryllysine; alternate modification. Residues K19 and K24 each carry the N6-butyryllysine; alternate modification. Position 19 is an N6-methylated lysine; alternate (K19). K24 carries the N6-acetyllysine modification. N6-acetyllysine; alternate is present on residues K28 and K37. 2 positions are modified to N6-methylated lysine; alternate: K28 and K37. Phosphotyrosine is present on Y42. K57 bears the N6-(2-hydroxyisobutyryl)lysine; alternate mark. Position 57 is an N6-lactoyllysine; alternate (K57). K57 carries the post-translational modification N6-glutaryllysine; alternate. K57 carries the post-translational modification N6-succinyllysine; alternate. S58 bears the Phosphoserine mark. An N6-(2-hydroxyisobutyryl)lysine; alternate mark is found at K65 and K80. N6-methylated lysine is present on residues K65 and K80. At K80 the chain carries N6-lactoyllysine; alternate. An N6-glutaryllysine; alternate modification is found at K80. K80 is subject to N6-succinyllysine; alternate. At T81 the chain carries Phosphothreonine. 2 positions are modified to N6-acetyllysine; alternate: K116 and K123. K116 and K123 each carry N6-glutaryllysine; alternate. Residue K123 is modified to N6-(2-hydroxyisobutyryl)lysine; alternate. K123 carries the post-translational modification N6-methylated lysine; alternate. K123 is modified (N6-succinyllysine; alternate).

This sequence belongs to the histone H3 family. In terms of assembly, the nucleosome is a histone octamer containing two molecules each of H2A, H2B, H3 and H4 assembled in one H3-H4 heterotetramer and two H2A-H2B heterodimers. The octamer wraps approximately 147 bp of DNA. In terms of processing, acetylation is generally linked to gene activation. Acetylation on Lys-19 (H3K18ac) and Lys-24 (H3K24ac) favors methylation at Arg-18 (H3R17me). Acetylation at Lys-123 (H3K122ac) by EP300/p300 plays a central role in chromatin structure: localizes at the surface of the histone octamer and stimulates transcription, possibly by promoting nucleosome instability. Post-translationally, asymmetric dimethylation at Arg-18 (H3R17me2a) is linked to gene activation. Asymmetric dimethylation at Arg-3 (H3R2me2a) by PRMT6 is linked to gene repression and is mutually exclusive with H3 Lys-5 methylation (H3K4me2 and H3K4me3). H3R2me2a is present at the 3' of genes regardless of their transcription state and is enriched on inactive promoters, while it is absent on active promoters. Methylation at Lys-5 (H3K4me) and Lys-80 (H3K79me) are linked to gene activation. Methylation at Lys-5 (H3K4me) facilitates subsequent acetylation of H3 and H4. Methylation at Lys-80 (H3K79me) is associated with DNA double-strand break (DSB) responses and is a specific target for TP53BP1. Methylation at Lys-10 (H3K9me) and Lys-28 (H3K27me) are linked to gene repression. Methylation at Lys-10 (H3K9me) is a specific target for HP1 proteins (CBX1, CBX3 and CBX5) and prevents subsequent phosphorylation at Ser-11 (H3S10ph) and acetylation of H3 and H4. Methylation at Lys-5 (H3K4me) and Lys-80 (H3K79me) require preliminary monoubiquitination of H2B at 'Lys-120'. In terms of processing, phosphorylated at Thr-4 (H3T3ph) by HASPIN during prophase and dephosphorylated during anaphase. Phosphorylation at Ser-11 (H3S10ph) by aurkb is crucial for chromosome condensation and cell-cycle progression during mitosis and meiosis. In addition phosphorylation at Ser-11 (H3S10ph) by rps6ka4 and rps6ka5 is important during interphase because it enables the transcription of genes following external stimulation, like mitogens, stress, growth factors or UV irradiation and result in the activation of genes, such as c-fos and c-jun. Phosphorylation at Ser-11 (H3S10ph), which is linked to gene activation, prevents methylation at Lys-10 (H3K9me) but facilitates acetylation of H3 and H4. Phosphorylation at Ser-11 (H3S10ph) by aurkb mediates the dissociation of HP1 proteins (cbx1, cbx3 and cbx5) from heterochromatin. Phosphorylation at Ser-11 (H3S10ph) is also an essential regulatory mechanism for neoplastic cell transformation. Phosphorylation at Thr-7 (H3T6ph) by prkcb is a specific tag for epigenetic transcriptional activation that prevents demethylation of Lys-5 (H3K4me) by lsd1/kdm1a. At centromeres, specifically phosphorylated at Thr-12 (H3T11ph) from prophase to early anaphase, by DAPK3 and PKN1. Phosphorylation at Thr-12 (H3T11ph) by PKN1 or isoform M2 of PKM (PKM2) is a specific tag for epigenetic transcriptional activation that promotes demethylation of Lys-10 (H3K9me) by kdm4c/jmjd2c. Phosphorylation at Tyr-42 (H3Y41ph) by jak2 promotes exclusion of cbx5 (HP1 alpha) from chromatin. Post-translationally, lysine deamination at Lys-5 (H3K4all) to form allysine only takes place on H3K4me3 and results in gene repression. Butyrylation of histones marks active promoters and competes with histone acetylation. It is present during late spermatogenesis. In terms of processing, succinylation at Lys-80 (H3K79succ) by KAT2A takes place with a maximum frequency around the transcription start sites of genes. It gives a specific tag for epigenetic transcription activation. Desuccinylation at Lys-123 (H3K122succ) by SIRT7 in response to DNA damage promotes chromatin condensation and double-strand breaks (DSBs) repair. Post-translationally, serine ADP-ribosylation constitutes the primary form of ADP-ribosylation of proteins in response to DNA damage. Serine ADP-ribosylation at Ser-11 (H3S10ADPr) is mutually exclusive with phosphorylation at Ser-11 (H3S10ph) and impairs acetylation at Lys-10 (H3K9ac).

The protein resides in the nucleus. It localises to the chromosome. Core component of nucleosome. Nucleosomes wrap and compact DNA into chromatin, limiting DNA accessibility to the cellular machineries which require DNA as a template. Histones thereby play a central role in transcription regulation, DNA repair, DNA replication and chromosomal stability. DNA accessibility is regulated via a complex set of post-translational modifications of histones, also called histone code, and nucleosome remodeling. The chain is Histone H3.3C (h3-5) from Xenopus laevis (African clawed frog).